The following is a 115-amino-acid chain: SPbeta prophage-derived uncharacterized membrane protein YosE (115 aa).

Transmembrane regions (helical) follow at residues Ile-20–Asn-42, Val-58–Gly-78, and Gly-95–Ile-115.

It localises to the cell membrane. This is SPbeta prophage-derived uncharacterized membrane protein YosE (yosE) from Bacillus subtilis (strain 168).